The primary structure comprises 397 residues: MQKKTLSDISCKGKRILMRVDFNVPLDLNGTITNDKRIIEALPSIRQVLETGGRLILMSHLGRPKGKVTPELSLAPVARRLSELLDTDVVMANNCIGTEAMQQALALQDGEVMMLENLRFHPEEEKNDPEFARELASMGEIYVNDAFGTAHRAHASTEGICHYVPISVAGFLIEKELRYLGNALANPERPFLAILGGAKISGKIDVLDNLFDKVDTILIGGAMIFTFFKAQGYQVGTSLVEEDKIELAKHLLEKAAAKNIRMLLPEDVIAASAFSADAETATVPIDSIPETMMGLDIGPKTIDTYSREILKARTIVWNGPMGVFEIDAFATGTIAIAHALADATAKGAISIIGGGDSAAAVMKAGLESGITHISTGGGASLEFLEGKELPGIAALND.

Residues 21–23 (DFN), R37, 60–63 (HLGR), R119, and R152 each bind substrate. ATP-binding positions include K203, G294, E325, and 354–357 (GGDS).

This sequence belongs to the phosphoglycerate kinase family. As to quaternary structure, monomer.

Its subcellular location is the cytoplasm. The enzyme catalyses (2R)-3-phosphoglycerate + ATP = (2R)-3-phospho-glyceroyl phosphate + ADP. Its pathway is carbohydrate degradation; glycolysis; pyruvate from D-glyceraldehyde 3-phosphate: step 2/5. The sequence is that of Phosphoglycerate kinase from Prosthecochloris aestuarii (strain DSM 271 / SK 413).